The following is a 72-amino-acid chain: UPF0352 protein swp_2271 (72 aa).

The protein belongs to the UPF0352 family.

The protein is UPF0352 protein swp_2271 of Shewanella piezotolerans (strain WP3 / JCM 13877).